The chain runs to 431 residues: MSVRGYSGVQVISSRKHRSMSRLPTVLLLLASAAVLAAGGQEATEDPFADETDQCQISVSAETMKSLHGGSMQPDGTCDNLWESFLSQFHQVRENLTACQERAAAGPAPDPSSQFCQQLLDDAQRQMEQEHRQYAATLEEQLHAAQQETQQEQEMKKALQKQLDALTDSRNALYIDLLLANIAIGETKQALSYYNLMPASMPIDKLHEQIVRFVYRVTIYQDQRLLNLMRFVRDIPSVEERRSLYQLAQREVQKRPSQRDGYVAAVYALSVREDLPVYQANRQLYDDLVRQSETRLKEQVANGNFKQAAELAARQPQHFRQLQTSLATIELKHWRKFDRFVPYANALPQPAQRLEVLRVLLSQIGDREKKTSHKYLVKAARQFDICEQFIGRGKVDQAVKKQLEELRGKFATFAKGKNYQHYLSESRKSSG.

The first 39 residues, 1–39 (MSVRGYSGVQVISSRKHRSMSRLPTVLLLLASAAVLAAG), serve as a signal peptide directing secretion. Asparagine 95 carries N-linked (GlcNAc...) asparagine glycosylation. Residues 120 to 169 (LDDAQRQMEQEHRQYAATLEEQLHAAQQETQQEQEMKKALQKQLDALTDS) are a coiled coil.

In terms of assembly, homodimer; disulfide-linked. (Microbial infection) Interacts with Plasmodium berghei TRAP (via integrin-like A-domain); the interaction probably promotes sporozoite invasion of salivary gland. In terms of tissue distribution, female saliva (at protein level). Female salivary gland (at protein level).

It localises to the secreted. (Microbial infection) Facilitates invasion of mosquito salivary glands by Plasmodium yoelii sporozoites. In terms of biological role, (Microbial infection) Facilitates invasion of mosquito salivary glands by Plasmodium falciparum sporozoites. Its function is as follows. (Microbial infection) Probably facilitates invasion of mosquito salivary glands by Plasmodium berghei sporozoites. The sequence is that of Saglin from Anopheles gambiae (African malaria mosquito).